A 341-amino-acid polypeptide reads, in one-letter code: Anthranilate phosphoribosyltransferase (341 aa).

5-phospho-alpha-D-ribose 1-diphosphate is bound by residues Gly81, 84–85 (GD), 91–94 (NVST), 109–117 (KHGNRSVSS), and Ser121. Gly81 provides a ligand contact to anthranilate. Ser93 contacts Mg(2+). Asn112 lines the anthranilate pocket. Position 167 (Arg167) interacts with anthranilate. Positions 226 and 227 each coordinate Mg(2+).

It belongs to the anthranilate phosphoribosyltransferase family. In terms of assembly, homodimer. Requires Mg(2+) as cofactor.

The enzyme catalyses N-(5-phospho-beta-D-ribosyl)anthranilate + diphosphate = 5-phospho-alpha-D-ribose 1-diphosphate + anthranilate. The protein operates within amino-acid biosynthesis; L-tryptophan biosynthesis; L-tryptophan from chorismate: step 2/5. Functionally, catalyzes the transfer of the phosphoribosyl group of 5-phosphorylribose-1-pyrophosphate (PRPP) to anthranilate to yield N-(5'-phosphoribosyl)-anthranilate (PRA). The sequence is that of Anthranilate phosphoribosyltransferase from Saccharophagus degradans (strain 2-40 / ATCC 43961 / DSM 17024).